A 250-amino-acid polypeptide reads, in one-letter code: Ribose-5-phosphate isomerase A (250 aa).

Residues 33 to 36, 89 to 92, and 102 to 105 each bind substrate; these read TGST, DGAD, and KGGG. The active-site Proton acceptor is the glutamate 111. Substrate is bound at residue lysine 129.

This sequence belongs to the ribose 5-phosphate isomerase family. In terms of assembly, homodimer.

It catalyses the reaction aldehydo-D-ribose 5-phosphate = D-ribulose 5-phosphate. It participates in carbohydrate degradation; pentose phosphate pathway; D-ribose 5-phosphate from D-ribulose 5-phosphate (non-oxidative stage): step 1/1. Its function is as follows. Catalyzes the reversible conversion of ribose-5-phosphate to ribulose 5-phosphate. This is Ribose-5-phosphate isomerase A from Cereibacter sphaeroides (strain ATCC 17025 / ATH 2.4.3) (Rhodobacter sphaeroides).